The following is a 97-amino-acid chain: Co-chaperonin GroES (97 aa).

The protein belongs to the GroES chaperonin family. Heptamer of 7 subunits arranged in a ring. Interacts with the chaperonin GroEL.

The protein resides in the cytoplasm. Together with the chaperonin GroEL, plays an essential role in assisting protein folding. The GroEL-GroES system forms a nano-cage that allows encapsulation of the non-native substrate proteins and provides a physical environment optimized to promote and accelerate protein folding. GroES binds to the apical surface of the GroEL ring, thereby capping the opening of the GroEL channel. In Buchnera aphidicola subsp. Pterocomma populeum, this protein is Co-chaperonin GroES.